Reading from the N-terminus, the 163-residue chain is Phosphopantetheine adenylyltransferase (163 aa).

Substrate is bound at residue T11. ATP contacts are provided by residues 11 to 12 (TF) and H19. Residues K43, L75, and R89 each coordinate substrate. Residues 90 to 92 (GLR), E100, and 125 to 131 (YSFISST) contribute to the ATP site.

This sequence belongs to the bacterial CoaD family. Homohexamer. Mg(2+) serves as cofactor.

The protein localises to the cytoplasm. It carries out the reaction (R)-4'-phosphopantetheine + ATP + H(+) = 3'-dephospho-CoA + diphosphate. Its pathway is cofactor biosynthesis; coenzyme A biosynthesis; CoA from (R)-pantothenate: step 4/5. In terms of biological role, reversibly transfers an adenylyl group from ATP to 4'-phosphopantetheine, yielding dephospho-CoA (dPCoA) and pyrophosphate. The protein is Phosphopantetheine adenylyltransferase of Acinetobacter baumannii (strain SDF).